The primary structure comprises 85 residues: U4-theraphotoxin-Hhn1c (85 aa).

Residues 1-22 form the signal peptide; the sequence is MKVTLIAILTCAAVLVLHTTAA. The propeptide occupies 23-48; sequence EELEAESQLMEVGMPDTELAAVDEER. 3 disulfides stabilise this stretch: cysteine 52–cysteine 66, cysteine 56–cysteine 77, and cysteine 71–cysteine 82.

It belongs to the neurotoxin 12 (Hwtx-2) family. 02 (Hwtx-2) subfamily. In terms of tissue distribution, expressed by the venom gland.

The protein resides in the secreted. Functionally, postsynaptic neurotoxin. The chain is U4-theraphotoxin-Hhn1c from Cyriopagopus hainanus (Chinese bird spider).